Consider the following 261-residue polypeptide: Cytochrome c oxidase subunit 3 (261 aa).

The Mitochondrial matrix portion of the chain corresponds to 1 to 15 (MTHQSHAYHMVKPSP). Residues 16 to 34 (WPLTGALSALLMTSGLAMW) traverse the membrane as a helical segment. Residues 35 to 40 (FHFYST) lie on the Mitochondrial intermembrane side of the membrane. A helical transmembrane segment spans residues 41-66 (TLLTLGLLTNTLTMYQWWRDVMREGT). The Mitochondrial matrix portion of the chain corresponds to 67-72 (YQGHHT). Residues 73-105 (PPVQKGLRYGMILFITSEVFFFAGFFWAFYHSS) traverse the membrane as a helical segment. Topologically, residues 106 to 128 (LAPTPQLGGHWPPTGITPLNPLE) are mitochondrial intermembrane. The chain crosses the membrane as a helical span at residues 129–152 (VPLLNTSVLLASGVSITWAHHSLM). The Mitochondrial matrix segment spans residues 153–155 (ENN). The chain crosses the membrane as a helical span at residues 156–183 (RNQMIQALLITILLGLYFTLLQASEYFE). Topologically, residues 184-190 (SPFTISD) are mitochondrial intermembrane. A helical membrane pass occupies residues 191–223 (GIYGSTFFVATGFHGLHVIIGSTFLTICLIRQL). The Mitochondrial matrix portion of the chain corresponds to 224–232 (MFHFTSKHH). The chain crosses the membrane as a helical span at residues 233–256 (FGFQAAAWYWHFVDVVWLFLYVSI). Residues 257-261 (YWWGS) lie on the Mitochondrial intermembrane side of the membrane.

Belongs to the cytochrome c oxidase subunit 3 family. Component of the cytochrome c oxidase (complex IV, CIV), a multisubunit enzyme composed of 14 subunits. The complex is composed of a catalytic core of 3 subunits MT-CO1, MT-CO2 and MT-CO3, encoded in the mitochondrial DNA, and 11 supernumerary subunits COX4I, COX5A, COX5B, COX6A, COX6B, COX6C, COX7A, COX7B, COX7C, COX8 and NDUFA4, which are encoded in the nuclear genome. The complex exists as a monomer or a dimer and forms supercomplexes (SCs) in the inner mitochondrial membrane with NADH-ubiquinone oxidoreductase (complex I, CI) and ubiquinol-cytochrome c oxidoreductase (cytochrome b-c1 complex, complex III, CIII), resulting in different assemblies (supercomplex SCI(1)III(2)IV(1) and megacomplex MCI(2)III(2)IV(2)).

It is found in the mitochondrion inner membrane. The catalysed reaction is 4 Fe(II)-[cytochrome c] + O2 + 8 H(+)(in) = 4 Fe(III)-[cytochrome c] + 2 H2O + 4 H(+)(out). Its function is as follows. Component of the cytochrome c oxidase, the last enzyme in the mitochondrial electron transport chain which drives oxidative phosphorylation. The respiratory chain contains 3 multisubunit complexes succinate dehydrogenase (complex II, CII), ubiquinol-cytochrome c oxidoreductase (cytochrome b-c1 complex, complex III, CIII) and cytochrome c oxidase (complex IV, CIV), that cooperate to transfer electrons derived from NADH and succinate to molecular oxygen, creating an electrochemical gradient over the inner membrane that drives transmembrane transport and the ATP synthase. Cytochrome c oxidase is the component of the respiratory chain that catalyzes the reduction of oxygen to water. Electrons originating from reduced cytochrome c in the intermembrane space (IMS) are transferred via the dinuclear copper A center (CU(A)) of subunit 2 and heme A of subunit 1 to the active site in subunit 1, a binuclear center (BNC) formed by heme A3 and copper B (CU(B)). The BNC reduces molecular oxygen to 2 water molecules using 4 electrons from cytochrome c in the IMS and 4 protons from the mitochondrial matrix. This is Cytochrome c oxidase subunit 3 (MT-CO3) from Pan troglodytes (Chimpanzee).